Reading from the N-terminus, the 289-residue chain is ATP synthase gamma chain (289 aa).

Belongs to the ATPase gamma chain family. F-type ATPases have 2 components, CF(1) - the catalytic core - and CF(0) - the membrane proton channel. CF(1) has five subunits: alpha(3), beta(3), gamma(1), delta(1), epsilon(1). CF(0) has three main subunits: a, b and c.

The protein localises to the cell inner membrane. Produces ATP from ADP in the presence of a proton gradient across the membrane. The gamma chain is believed to be important in regulating ATPase activity and the flow of protons through the CF(0) complex. This Dichelobacter nodosus (strain VCS1703A) protein is ATP synthase gamma chain.